The chain runs to 341 residues: S-adenosylmethionine:tRNA ribosyltransferase-isomerase (341 aa).

Belongs to the QueA family. In terms of assembly, monomer.

Its subcellular location is the cytoplasm. It carries out the reaction 7-aminomethyl-7-carbaguanosine(34) in tRNA + S-adenosyl-L-methionine = epoxyqueuosine(34) in tRNA + adenine + L-methionine + 2 H(+). It participates in tRNA modification; tRNA-queuosine biosynthesis. Transfers and isomerizes the ribose moiety from AdoMet to the 7-aminomethyl group of 7-deazaguanine (preQ1-tRNA) to give epoxyqueuosine (oQ-tRNA). In Clostridium botulinum (strain Okra / Type B1), this protein is S-adenosylmethionine:tRNA ribosyltransferase-isomerase.